The sequence spans 209 residues: MSKMAEEKVLAAPATVDGGMQSSGDLQASSAAAARVRPVETLLRAAPLGLCVAAMAIMLRNSVTNEYGTVSYSDLGGFKYLVYANGLCAAYSLASAFYIAVPRPATLSRSWVVFLLDQVFTYLILAAGAASAELLYLAYNGDKEVTWSEACGVFGGFCRQARTSVAITFASVACYILLSLISSYRLFSAYDPPQPSLGNKGVEIAAFPR.

Residues 1 to 38 (MSKMAEEKVLAAPATVDGGMQSSGDLQASSAAAARVRP) are Cytoplasmic-facing. The helical transmembrane segment at 39–59 (VETLLRAAPLGLCVAAMAIML) threads the bilayer. At 60–80 (RNSVTNEYGTVSYSDLGGFKY) the chain is on the extracellular side. A helical membrane pass occupies residues 81–101 (LVYANGLCAAYSLASAFYIAV). Residues 102–109 (PRPATLSR) are Cytoplasmic-facing. A helical transmembrane segment spans residues 110–130 (SWVVFLLDQVFTYLILAAGAA). The Extracellular portion of the chain corresponds to 131 to 163 (SAELLYLAYNGDKEVTWSEACGVFGGFCRQART). A helical membrane pass occupies residues 164 to 184 (SVAITFASVACYILLSLISSY). The Cytoplasmic portion of the chain corresponds to 185–209 (RLFSAYDPPQPSLGNKGVEIAAFPR).

It belongs to the Casparian strip membrane proteins (CASP) family. Homodimer and heterodimers.

The protein resides in the cell membrane. The sequence is that of CASP-like protein 2A1 from Oryza sativa subsp. indica (Rice).